The chain runs to 231 residues: Lactate utilization protein C (231 aa).

This sequence belongs to the LutC/YkgG family.

In terms of biological role, is involved in L-lactate degradation and allows cells to grow with lactate as the sole carbon source. This Macrococcus caseolyticus (strain JCSC5402) (Macrococcoides caseolyticum) protein is Lactate utilization protein C.